The chain runs to 215 residues: uncharacterized protein (215 aa).

This is an uncharacterized protein from Methanocaldococcus jannaschii (strain ATCC 43067 / DSM 2661 / JAL-1 / JCM 10045 / NBRC 100440) (Methanococcus jannaschii).